The primary structure comprises 384 residues: Anhydro-N-acetylmuramic acid kinase (384 aa).

Residue 12-19 coordinates ATP; that stretch reads GTSLDGVD.

It belongs to the anhydro-N-acetylmuramic acid kinase family.

It carries out the reaction 1,6-anhydro-N-acetyl-beta-muramate + ATP + H2O = N-acetyl-D-muramate 6-phosphate + ADP + H(+). It functions in the pathway amino-sugar metabolism; 1,6-anhydro-N-acetylmuramate degradation. It participates in cell wall biogenesis; peptidoglycan recycling. Functionally, catalyzes the specific phosphorylation of 1,6-anhydro-N-acetylmuramic acid (anhMurNAc) with the simultaneous cleavage of the 1,6-anhydro ring, generating MurNAc-6-P. Is required for the utilization of anhMurNAc either imported from the medium or derived from its own cell wall murein, and thus plays a role in cell wall recycling. In Cronobacter sakazakii (strain ATCC BAA-894) (Enterobacter sakazakii), this protein is Anhydro-N-acetylmuramic acid kinase.